Reading from the N-terminus, the 226-residue chain is EEF1A lysine methyltransferase 3 (226 aa).

Residues W57, 83-85 (GAG), D104, W133, and A150 each bind S-adenosyl-L-methionine.

This sequence belongs to the methyltransferase superfamily. METTL21 family. As to quaternary structure, interacts with members of the heat shock protein 70 and 90 families and of the TCP-1 chaperonin family, as well as with HSPD1, STIP1 and tubulin; at least some of these proteins may be methylation substrates.

It is found in the cytoplasm. The protein resides in the cytoskeleton. Its subcellular location is the microtubule organizing center. The protein localises to the centrosome. The enzyme catalyses L-lysyl-[protein] + 3 S-adenosyl-L-methionine = N(6),N(6),N(6)-trimethyl-L-lysyl-[protein] + 3 S-adenosyl-L-homocysteine + 3 H(+). It carries out the reaction L-lysyl-[protein] + S-adenosyl-L-methionine = N(6)-methyl-L-lysyl-[protein] + S-adenosyl-L-homocysteine + H(+). It catalyses the reaction N(6)-methyl-L-lysyl-[protein] + S-adenosyl-L-methionine = N(6),N(6)-dimethyl-L-lysyl-[protein] + S-adenosyl-L-homocysteine + H(+). The catalysed reaction is N(6),N(6)-dimethyl-L-lysyl-[protein] + S-adenosyl-L-methionine = N(6),N(6),N(6)-trimethyl-L-lysyl-[protein] + S-adenosyl-L-homocysteine + H(+). Its function is as follows. Protein-lysine methyltransferase that selectively mono-, di- and trimethylates 'Lys-165' of the translation elongation factors EEF1A1 and EEF1A2 in an aminoacyl-tRNA and GTP-dependent manner. EEF1A1 methylation by EEF1AKMT3 is dynamic as well as inducible by stress conditions, such as ER-stress, and plays a regulatory role on mRNA translation. This Bos taurus (Bovine) protein is EEF1A lysine methyltransferase 3.